The primary structure comprises 167 residues: uncharacterized protein (167 aa).

Positions 1-10 (MPLRRCRAWR) are enriched in basic residues. The tract at residues 1-23 (MPLRRCRAWRGHSQPGTGSRSNE) is disordered.

This is an uncharacterized protein from Sinorhizobium fredii (strain NBRC 101917 / NGR234).